The chain runs to 262 residues: Hydroxyethylthiazole kinase (262 aa).

Methionine 50 contacts substrate. Residues arginine 125 and threonine 171 each coordinate ATP. Glycine 198 serves as a coordination point for substrate.

Belongs to the Thz kinase family. Mg(2+) serves as cofactor.

It carries out the reaction 5-(2-hydroxyethyl)-4-methylthiazole + ATP = 4-methyl-5-(2-phosphooxyethyl)-thiazole + ADP + H(+). It participates in cofactor biosynthesis; thiamine diphosphate biosynthesis; 4-methyl-5-(2-phosphoethyl)-thiazole from 5-(2-hydroxyethyl)-4-methylthiazole: step 1/1. In terms of biological role, catalyzes the phosphorylation of the hydroxyl group of 4-methyl-5-beta-hydroxyethylthiazole (THZ). This chain is Hydroxyethylthiazole kinase, found in Escherichia coli O17:K52:H18 (strain UMN026 / ExPEC).